The following is a 161-amino-acid chain: Cyclic pyranopterin monophosphate synthase (161 aa).

Residues 76–78 and 114–115 each bind substrate; these read MCH and ME. Residue D129 is part of the active site.

The protein belongs to the MoaC family. Homohexamer; trimer of dimers.

It catalyses the reaction (8S)-3',8-cyclo-7,8-dihydroguanosine 5'-triphosphate = cyclic pyranopterin phosphate + diphosphate. It functions in the pathway cofactor biosynthesis; molybdopterin biosynthesis. Catalyzes the conversion of (8S)-3',8-cyclo-7,8-dihydroguanosine 5'-triphosphate to cyclic pyranopterin monophosphate (cPMP). The protein is Cyclic pyranopterin monophosphate synthase of Clostridium acetobutylicum (strain ATCC 824 / DSM 792 / JCM 1419 / IAM 19013 / LMG 5710 / NBRC 13948 / NRRL B-527 / VKM B-1787 / 2291 / W).